Reading from the N-terminus, the 617-residue chain is V-type proton ATPase catalytic subunit A (617 aa).

ATP is bound at residue 257–264; the sequence is GAFGCGKT.

Belongs to the ATPase alpha/beta chains family. As to quaternary structure, V-ATPase is a heteromultimeric enzyme composed of a peripheral catalytic V1 complex (components A to H) attached to an integral membrane V0 proton pore complex (components: a, c, c', c'', d, e, f and VOA1). Is a probable target for sumoylation.

It is found in the vacuole membrane. It carries out the reaction ATP + H2O + 4 H(+)(in) = ADP + phosphate + 5 H(+)(out). Its function is as follows. Catalytic subunit of the V1 complex of vacuolar(H+)-ATPase (V-ATPase), a multisubunit enzyme composed of a peripheral complex (V1) that hydrolyzes ATP and a membrane integral complex (V0) that translocates protons. V-ATPase is responsible for acidifying and maintaining the pH of intracellular compartments. Mediates oxidative stress response, filamentous growth, and plays an important role in virulence. This is V-type proton ATPase catalytic subunit A from Candida albicans (strain SC5314 / ATCC MYA-2876) (Yeast).